Here is a 497-residue protein sequence, read N- to C-terminus: MEKSWFNSMLSKGEVEYRCGLSKSMDSLGPIENTSISEDPVINDPDKNIYNSIWGESSSYYSNVDHLVGAKDIRNFISDDTFLVRDSNRDSYSIYFDIENNNFEIDNDHSFLSELESFFYSYRNSSYMNNRSKSDDPHYDPYMYDTKYSWTNHINSCIDSYLRSQICIDSSILSGSDNYNDSYIYNYICSESGKSSESENSNIRTNTNRSDLTIKESSNDLDITQKYRHLWVQCENCYGLNYKKFLKSKMNICEQCGYYLKMSSSDRIELLVDPGTWNPMDENMVSLDPIEFHSEEEPYKDRIDSYQRKTGLTEAVQTGTGQLNGIPIALGVMDFQFMGGSMGSVVGEKITRLIEYATNEFLPLIIVCASGGARMQEGSLSLMQMAKISSALYDYQSNKKLFYVSILTSPTTGGVTASFGMLGDIIIAEPNAYIAFAGKRVIEQTLNKTVPEGSQAAEYLFHKGLFDSIVPRNPLKGVLSELFQLHGFFPLNQNSIK.

Residues 230–497 (LWVQCENCYG…FFPLNQNSIK (268 aa)) enclose the CoA carboxyltransferase N-terminal domain. C234, C237, C253, and C256 together coordinate Zn(2+). The segment at 234-256 (CENCYGLNYKKFLKSKMNICEQC) adopts a C4-type zinc-finger fold.

This sequence belongs to the AccD/PCCB family. As to quaternary structure, acetyl-CoA carboxylase is a heterohexamer composed of biotin carboxyl carrier protein, biotin carboxylase and 2 subunits each of ACCase subunit alpha and ACCase plastid-coded subunit beta (accD). It depends on Zn(2+) as a cofactor.

It is found in the plastid. Its subcellular location is the chloroplast stroma. The catalysed reaction is N(6)-carboxybiotinyl-L-lysyl-[protein] + acetyl-CoA = N(6)-biotinyl-L-lysyl-[protein] + malonyl-CoA. It participates in lipid metabolism; malonyl-CoA biosynthesis; malonyl-CoA from acetyl-CoA: step 1/1. In terms of biological role, component of the acetyl coenzyme A carboxylase (ACC) complex. Biotin carboxylase (BC) catalyzes the carboxylation of biotin on its carrier protein (BCCP) and then the CO(2) group is transferred by the transcarboxylase to acetyl-CoA to form malonyl-CoA. The protein is Acetyl-coenzyme A carboxylase carboxyl transferase subunit beta, chloroplastic of Carica papaya (Papaya).